A 351-amino-acid chain; its full sequence is Glycerol-3-phosphate dehydrogenase [NAD(P)+] (351 aa).

NADPH-binding residues include Ser18, Trp19, Arg38, and Lys122. Residues Lys122, Gly153, and Ser155 each contribute to the sn-glycerol 3-phosphate site. Ala157 serves as a coordination point for NADPH. 5 residues coordinate sn-glycerol 3-phosphate: Lys208, Asp261, Ser271, Arg272, and Asn273. The active-site Proton acceptor is the Lys208. Position 272 (Arg272) interacts with NADPH. Glu297 is an NADPH binding site.

Belongs to the NAD-dependent glycerol-3-phosphate dehydrogenase family.

The protein resides in the cytoplasm. It catalyses the reaction sn-glycerol 3-phosphate + NAD(+) = dihydroxyacetone phosphate + NADH + H(+). The catalysed reaction is sn-glycerol 3-phosphate + NADP(+) = dihydroxyacetone phosphate + NADPH + H(+). It participates in membrane lipid metabolism; glycerophospholipid metabolism. In terms of biological role, catalyzes the reduction of the glycolytic intermediate dihydroxyacetone phosphate (DHAP) to sn-glycerol 3-phosphate (G3P), the key precursor for phospholipid synthesis. This is Glycerol-3-phosphate dehydrogenase [NAD(P)+] from Bordetella pertussis (strain Tohama I / ATCC BAA-589 / NCTC 13251).